A 318-amino-acid chain; its full sequence is MMHRNQTVVTEFFFTGLTSSFHLQIVLFLTFLCVYLATLLGNLGMIILIHQDTRLHIPMYFFLSHLSFVDACSSSVISPKMLSDIFVDKKVISFLGCAIQFCLFSQFVVTECFLLASMAYDRYVAICKPLLYTLIMSQRVCVQLVIGPYSIGLISTVVHTTSAFILPYCGPNLINHFFCDLLPVLSLACADTQMNKHLLFIMAGILGVFSGIIILVSYVYIAITILKINSADGRRKAFSTCSSHLTAVSILYGTLFFIYVRPSSSFSLDINKVVSLFYTAVIPMLNPFIYSLRNKEVKDALIRTFEKKFCYSLQDKIL.

Topologically, residues 1-25 (MMHRNQTVVTEFFFTGLTSSFHLQI) are extracellular. A glycan (N-linked (GlcNAc...) asparagine) is linked at Asn-5. The helical transmembrane segment at 26–46 (VLFLTFLCVYLATLLGNLGMI) threads the bilayer. The Cytoplasmic segment spans residues 47–54 (ILIHQDTR). Residues 55 to 75 (LHIPMYFFLSHLSFVDACSSS) traverse the membrane as a helical segment. Topologically, residues 76-99 (VISPKMLSDIFVDKKVISFLGCAI) are extracellular. A disulfide bond links Cys-97 and Cys-189. Residues 100 to 120 (QFCLFSQFVVTECFLLASMAY) form a helical membrane-spanning segment. Residues 121–133 (DRYVAICKPLLYT) lie on the Cytoplasmic side of the membrane. A helical transmembrane segment spans residues 134–154 (LIMSQRVCVQLVIGPYSIGLI). Over 155-196 (STVVHTTSAFILPYCGPNLINHFFCDLLPVLSLACADTQMNK) the chain is Extracellular. A helical transmembrane segment spans residues 197–217 (HLLFIMAGILGVFSGIIILVS). Residues 218 to 237 (YVYIAITILKINSADGRRKA) are Cytoplasmic-facing. Residues 238 to 258 (FSTCSSHLTAVSILYGTLFFI) traverse the membrane as a helical segment. At 259–271 (YVRPSSSFSLDIN) the chain is on the extracellular side. A helical membrane pass occupies residues 272–292 (KVVSLFYTAVIPMLNPFIYSL). Residues 293–318 (RNKEVKDALIRTFEKKFCYSLQDKIL) lie on the Cytoplasmic side of the membrane.

It belongs to the G-protein coupled receptor 1 family.

It localises to the cell membrane. Potential odorant receptor. The sequence is that of Olfactory receptor 5G25 from Mus musculus (Mouse).